A 119-amino-acid polypeptide reads, in one-letter code: Cytochrome c55X (119 aa).

The N-terminal stretch at 1-20 is a signal peptide; sequence MNAPPDFRRAASHALWLALA. Cysteine 51, cysteine 54, and histidine 55 together coordinate heme c.

Post-translationally, binds 1 heme c group covalently per subunit.

The protein resides in the periplasm. In terms of biological role, monoheme c-type cytochrome. In Pseudomonas aeruginosa (strain ATCC 15692 / DSM 22644 / CIP 104116 / JCM 14847 / LMG 12228 / 1C / PRS 101 / PAO1), this protein is Cytochrome c55X (nirC).